Consider the following 188-residue polypeptide: Large ribosomal subunit protein bL35m (188 aa).

The protein belongs to the bacterial ribosomal protein bL35 family.

The protein resides in the mitochondrion. The chain is Large ribosomal subunit protein bL35m (Mrpl35) from Mus musculus (Mouse).